The following is a 500-amino-acid chain: Cytochrome P450 2D15 (500 aa).

A heme-binding site is contributed by cysteine 446.

This sequence belongs to the cytochrome P450 family. Requires heme as cofactor. As to expression, liver. Also detected in several other tissues.

The protein localises to the endoplasmic reticulum membrane. It localises to the microsome membrane. It carries out the reaction an organic molecule + reduced [NADPH--hemoprotein reductase] + O2 = an alcohol + oxidized [NADPH--hemoprotein reductase] + H2O + H(+). In terms of biological role, high activity for the hydroxylation of bunitrolol and imipramine; low activity on debrisoquine. The chain is Cytochrome P450 2D15 (CYP2D15) from Canis lupus familiaris (Dog).